The primary structure comprises 264 residues: Thymidylate synthase (264 aa).

Residue Arg21 coordinates dUMP. Residue His51 coordinates (6R)-5,10-methylene-5,6,7,8-tetrahydrofolate. 126–127 (RR) lines the dUMP pocket. The Nucleophile role is filled by Cys146. Residues 166–169 (RSAD), Asn177, and 207–209 (HLY) each bind dUMP. Asp169 lines the (6R)-5,10-methylene-5,6,7,8-tetrahydrofolate pocket. Residue Ala263 coordinates (6R)-5,10-methylene-5,6,7,8-tetrahydrofolate.

This sequence belongs to the thymidylate synthase family. Bacterial-type ThyA subfamily. As to quaternary structure, homodimer.

It is found in the cytoplasm. It carries out the reaction dUMP + (6R)-5,10-methylene-5,6,7,8-tetrahydrofolate = 7,8-dihydrofolate + dTMP. The protein operates within pyrimidine metabolism; dTTP biosynthesis. Functionally, catalyzes the reductive methylation of 2'-deoxyuridine-5'-monophosphate (dUMP) to 2'-deoxythymidine-5'-monophosphate (dTMP) while utilizing 5,10-methylenetetrahydrofolate (mTHF) as the methyl donor and reductant in the reaction, yielding dihydrofolate (DHF) as a by-product. This enzymatic reaction provides an intracellular de novo source of dTMP, an essential precursor for DNA biosynthesis. The sequence is that of Thymidylate synthase from Stutzerimonas stutzeri (strain A1501) (Pseudomonas stutzeri).